We begin with the raw amino-acid sequence, 127 residues long: MSLLRNRLQALPALCLCVLVLACIGACQPEAQEGTLSPPPKLKMSRWSLVRGRMKELLETVVNRTRDGWQWFWSPSTFRGFMQTYYDDHLRDLGPLTKAWFLESKDSLLKKTHSLCPRLVCGDKDQG.

The first 27 residues, 1-27 (MSLLRNRLQALPALCLCVLVLACIGAC), serve as a signal peptide directing secretion. The N-linked (GlcNAc...) asparagine glycan is linked to Asn63.

Belongs to the apolipoprotein C4 family. In terms of tissue distribution, expressed by the liver and secreted in plasma.

The protein resides in the secreted. In terms of biological role, may participate in lipoprotein metabolism. The chain is Apolipoprotein C-IV (APOC4) from Homo sapiens (Human).